We begin with the raw amino-acid sequence, 182 residues long: NAD(P)H-quinone oxidoreductase subunit J (182 aa).

The protein belongs to the complex I 30 kDa subunit family. As to quaternary structure, NDH-1 can be composed of about 15 different subunits; different subcomplexes with different compositions have been identified which probably have different functions.

Its subcellular location is the cellular thylakoid membrane. It carries out the reaction a plastoquinone + NADH + (n+1) H(+)(in) = a plastoquinol + NAD(+) + n H(+)(out). The enzyme catalyses a plastoquinone + NADPH + (n+1) H(+)(in) = a plastoquinol + NADP(+) + n H(+)(out). Functionally, NDH-1 shuttles electrons from an unknown electron donor, via FMN and iron-sulfur (Fe-S) centers, to quinones in the respiratory and/or the photosynthetic chain. The immediate electron acceptor for the enzyme in this species is believed to be plastoquinone. Couples the redox reaction to proton translocation, and thus conserves the redox energy in a proton gradient. Cyanobacterial NDH-1 also plays a role in inorganic carbon-concentration. The protein is NAD(P)H-quinone oxidoreductase subunit J of Synechococcus sp. (strain WH7803).